Reading from the N-terminus, the 114-residue chain is MSETIEGGVKIDRLSPGDGKTFPKQGDLVTIHYTGTLENGQKFDSSVDRGSPFQCNIGVGQVIKGWDAGIPKLSVGEKARLTIPGPYAYGPRGFPGLIPPNATLIFDVELLKVN.

The PPIase FKBP-type domain occupies glycine 26 to asparagine 114.

Belongs to the FKBP-type PPIase family. FKBP1 subfamily.

It is found in the cytoplasm. It catalyses the reaction [protein]-peptidylproline (omega=180) = [protein]-peptidylproline (omega=0). With respect to regulation, inhibited by both FK506 and rapamycin. PPIases accelerate the folding of proteins. It catalyzes the cis-trans isomerization of proline imidic peptide bonds in oligopeptides. The protein is FK506-binding protein 1 (FPR1) of Candida glabrata (strain ATCC 2001 / BCRC 20586 / JCM 3761 / NBRC 0622 / NRRL Y-65 / CBS 138) (Yeast).